The sequence spans 374 residues: MVFLNSSPFKGRLLFFVYLLIISTRLVAADMNTQYGCYLVDSSLTEQGTFTYLDPAYCYNNICGGSDNIAFVAIRNNQCYCGSTLTATEVSSSLCTTPCPGYGSLMCGGDLYWSVYLTGNGVLQTTVSSSSVSSTTSSSSSSSPSSSSTTTTTSPSSSSSSSSSSSSSSSSSSSSSSSSSSSSSSSSSSSSSSSSSSSSSSSSSSSSVPITSSTSSSHSSSSSSSSSSSSSSRPSSSSSFITTMSSSTFISTVTVTPSSSSSSTSSEVPSSTAALALNASKASNHTSLNAGAIVGIVIGCVAFAVVMALCIFLYFYFRRFKIRMSDSANEGKYPSYASELDSRLDPAMMNRKSSESLADSQDYSRKILRVTNLN.

The first 29 residues, 1–29 (MVFLNSSPFKGRLLFFVYLLIISTRLVAA), serve as a signal peptide directing secretion. Residues 30–292 (DMNTQYGCYL…SNHTSLNAGA (263 aa)) are Extracellular-facing. The WSC domain occupies 31–119 (MNTQYGCYLV…DLYWSVYLTG (89 aa)). The disordered stretch occupies residues 132-236 (VSSTTSSSSS…SSSSSSRPSS (105 aa)). Residues asparagine 278 and asparagine 284 are each glycosylated (N-linked (GlcNAc...) asparagine). Residues 293–313 (IVGIVIGCVAFAVVMALCIFL) form a helical membrane-spanning segment. Over 314–374 (YFYFRRFKIR…RKILRVTNLN (61 aa)) the chain is Cytoplasmic. Position 354 is a phosphoserine (serine 354).

In terms of processing, O-mannosylated.

The protein resides in the membrane. The chain is Cell wall integrity and stress response component 1 (wsc1) from Schizosaccharomyces pombe (strain 972 / ATCC 24843) (Fission yeast).